The chain runs to 312 residues: tRNA pseudouridine synthase B (312 aa).

D46 functions as the Nucleophile in the catalytic mechanism. Substrate contacts are provided by Y74, Y177, and L198.

It belongs to the pseudouridine synthase TruB family. Type 1 subfamily.

It catalyses the reaction uridine(55) in tRNA = pseudouridine(55) in tRNA. Responsible for synthesis of pseudouridine from uracil-55 in the psi GC loop of transfer RNAs. In Buchnera aphidicola subsp. Acyrthosiphon pisum (strain APS) (Acyrthosiphon pisum symbiotic bacterium), this protein is tRNA pseudouridine synthase B.